The chain runs to 179 residues: ATP synthase subunit b, chloroplastic (179 aa).

A helical transmembrane segment spans residues 35-51 (IVILGGGIFKLGSTALS).

This sequence belongs to the ATPase B chain family. F-type ATPases have 2 components, F(1) - the catalytic core - and F(0) - the membrane proton channel. F(1) has five subunits: alpha(3), beta(3), gamma(1), delta(1), epsilon(1). F(0) has four main subunits: a(1), b(1), b'(1) and c(10-14). The alpha and beta chains form an alternating ring which encloses part of the gamma chain. F(1) is attached to F(0) by a central stalk formed by the gamma and epsilon chains, while a peripheral stalk is formed by the delta, b and b' chains.

The protein resides in the plastid. Its subcellular location is the chloroplast thylakoid membrane. In terms of biological role, f(1)F(0) ATP synthase produces ATP from ADP in the presence of a proton or sodium gradient. F-type ATPases consist of two structural domains, F(1) containing the extramembraneous catalytic core and F(0) containing the membrane proton channel, linked together by a central stalk and a peripheral stalk. During catalysis, ATP synthesis in the catalytic domain of F(1) is coupled via a rotary mechanism of the central stalk subunits to proton translocation. Functionally, component of the F(0) channel, it forms part of the peripheral stalk, linking F(1) to F(0). The polypeptide is ATP synthase subunit b, chloroplastic (Emiliania huxleyi (Coccolithophore)).